The sequence spans 907 residues: Probable disease resistance protein At1g58390 (907 aa).

Residues 144–456 form the NB-ARC domain; it reads QGDRQREMRQ…AEGISTAEDY (313 aa). ATP is bound at residue 190–197; that stretch reads GMGGLGKT. 2 LRR repeats span residues 608 to 631 and 843 to 868; these read LIHL…LGNL and MPLL…RFIY.

The protein belongs to the disease resistance NB-LRR family.

Its function is as follows. Possible disease resistance protein. The sequence is that of Probable disease resistance protein At1g58390 from Arabidopsis thaliana (Mouse-ear cress).